A 148-amino-acid polypeptide reads, in one-letter code: Large ribosomal subunit protein bL9 (148 aa).

Belongs to the bacterial ribosomal protein bL9 family.

Binds to the 23S rRNA. The sequence is that of Large ribosomal subunit protein bL9 from Chromohalobacter salexigens (strain ATCC BAA-138 / DSM 3043 / CIP 106854 / NCIMB 13768 / 1H11).